The sequence spans 435 residues: ATP-dependent RNA helicase RhlB (435 aa).

The Q motif motif lies at 9-37; sequence QKFADLGLNPQVVEGLEKKGFEFCTPIQA. One can recognise a Helicase ATP-binding domain in the interval 40-219; that stretch reads LPVLLSGQDI…FEHMHNPEHV (180 aa). Residue 53–60 coordinates ATP; it reads AQTGTGKT. The DEAD box signature appears at 165–168; that stretch reads DEAD. A Helicase C-terminal domain is found at 245-390; that stretch reads ALLQTLIEEE…VSDYDSSALI (146 aa). A disordered region spans residues 395–435; that stretch reads APVRTPSARNQQRRTNTGGARSGDRKSNNRRPRQPRQHKEA. The segment covering 401 to 413 has biased composition (polar residues); sequence SARNQQRRTNTGG. Basic residues predominate over residues 422 to 435; that stretch reads NNRRPRQPRQHKEA.

It belongs to the DEAD box helicase family. RhlB subfamily. As to quaternary structure, component of the RNA degradosome, which is a multiprotein complex involved in RNA processing and mRNA degradation.

The protein resides in the cytoplasm. The enzyme catalyses ATP + H2O = ADP + phosphate + H(+). Its function is as follows. DEAD-box RNA helicase involved in RNA degradation. Has RNA-dependent ATPase activity and unwinds double-stranded RNA. This Vibrio vulnificus (strain CMCP6) protein is ATP-dependent RNA helicase RhlB.